Reading from the N-terminus, the 283-residue chain is Shikimate dehydrogenase (NADP(+)) (283 aa).

Shikimate contacts are provided by residues 19–21 (SFS) and T66. Catalysis depends on K70, which acts as the Proton acceptor. E82 provides a ligand contact to NADP(+). N91 and D106 together coordinate shikimate. Residues 129-133 (GAGGA) and I225 each bind NADP(+). Residue Y227 participates in shikimate binding. NADP(+) is bound at residue G248.

The protein belongs to the shikimate dehydrogenase family. As to quaternary structure, homodimer.

It carries out the reaction shikimate + NADP(+) = 3-dehydroshikimate + NADPH + H(+). It functions in the pathway metabolic intermediate biosynthesis; chorismate biosynthesis; chorismate from D-erythrose 4-phosphate and phosphoenolpyruvate: step 4/7. Its function is as follows. Involved in the biosynthesis of the chorismate, which leads to the biosynthesis of aromatic amino acids. Catalyzes the reversible NADPH linked reduction of 3-dehydroshikimate (DHSA) to yield shikimate (SA). In Methanosphaera stadtmanae (strain ATCC 43021 / DSM 3091 / JCM 11832 / MCB-3), this protein is Shikimate dehydrogenase (NADP(+)).